Reading from the N-terminus, the 59-residue chain is Large ribosomal subunit protein uL30 (59 aa).

Belongs to the universal ribosomal protein uL30 family. In terms of assembly, part of the 50S ribosomal subunit.

The chain is Large ribosomal subunit protein uL30 from Listeria welshimeri serovar 6b (strain ATCC 35897 / DSM 20650 / CCUG 15529 / CIP 8149 / NCTC 11857 / SLCC 5334 / V8).